Reading from the N-terminus, the 452-residue chain is Scaffold protein ILK (452 aa).

ANK repeat units lie at residues 2–30 (DDIF…LNQG), 31–63 (DDHG…INVM), 64–96 (NRGD…INAV), 97–129 (NEHG…VSIA), and 130–174 (NKYS…GTTR). The 254-residue stretch at 193-446 (LSLSQKLNEN…PKFDMIVPIL (254 aa)) folds into the Protein kinase domain. ATP-binding residues include Asn200, Asn202, Ser204, His270, Met272, and Asn279. A Mg(2+)-binding site is contributed by Asp339. Lys341 is an ATP binding site. The Nuclear localization signal motif lies at 363–371 (KKPEEINRR).

This sequence belongs to the protein kinase superfamily. TKL Ser/Thr protein kinase family. As to quaternary structure, interacts with PXN/PAXILLIN (via LD motif 4).

Its subcellular location is the cell junction. The protein localises to the focal adhesion. It localises to the cell membrane. It is found in the cell projection. The protein resides in the lamellipodium. Its subcellular location is the cytoplasm. The protein localises to the myofibril. It localises to the sarcomere. It is found in the nucleus. The protein resides in the cytoskeleton. Its subcellular location is the microtubule organizing center. The protein localises to the centrosome. It localises to the cell cortex. Its function is as follows. Scaffold protein which mediates protein-protein interactions during a range of cellular events including focal adhesion assembly, cell adhesion and cell migration. The protein is Scaffold protein ILK of Gallus gallus (Chicken).